The primary structure comprises 374 residues: Queuine tRNA-ribosyltransferase (374 aa).

Asp94 (proton acceptor) is an active-site residue. Residues 94-98 (DSGGF), Asp148, Gln191, and Gly218 each bind substrate. Residues 249-255 (GVGSPDY) are RNA binding. The active-site Nucleophile is the Asp268. The segment at 273 to 277 (TRIGR) is RNA binding; important for wobble base 34 recognition. Zn(2+)-binding residues include Cys306, Cys308, Cys311, and His337.

It belongs to the queuine tRNA-ribosyltransferase family. As to quaternary structure, homodimer. Within each dimer, one monomer is responsible for RNA recognition and catalysis, while the other monomer binds to the replacement base PreQ1. Zn(2+) serves as cofactor.

The enzyme catalyses 7-aminomethyl-7-carbaguanine + guanosine(34) in tRNA = 7-aminomethyl-7-carbaguanosine(34) in tRNA + guanine. It participates in tRNA modification; tRNA-queuosine biosynthesis. Functionally, catalyzes the base-exchange of a guanine (G) residue with the queuine precursor 7-aminomethyl-7-deazaguanine (PreQ1) at position 34 (anticodon wobble position) in tRNAs with GU(N) anticodons (tRNA-Asp, -Asn, -His and -Tyr). Catalysis occurs through a double-displacement mechanism. The nucleophile active site attacks the C1' of nucleotide 34 to detach the guanine base from the RNA, forming a covalent enzyme-RNA intermediate. The proton acceptor active site deprotonates the incoming PreQ1, allowing a nucleophilic attack on the C1' of the ribose to form the product. After dissociation, two additional enzymatic reactions on the tRNA convert PreQ1 to queuine (Q), resulting in the hypermodified nucleoside queuosine (7-(((4,5-cis-dihydroxy-2-cyclopenten-1-yl)amino)methyl)-7-deazaguanosine). The chain is Queuine tRNA-ribosyltransferase from Acetivibrio thermocellus (strain ATCC 27405 / DSM 1237 / JCM 9322 / NBRC 103400 / NCIMB 10682 / NRRL B-4536 / VPI 7372) (Clostridium thermocellum).